The chain runs to 243 residues: Pleckstrin homology domain-containing family B member 1 (243 aa).

The PH domain occupies 21 to 128 (ALVRGGWLWR…WKTALLEANS (108 aa)).

As to quaternary structure, homodimer. Interacts (via PH domain) with MYO1C. Interacts (via PH domain) with MYO7A. Binds transducins. As to expression, highly expressed in retina and brain. Levels are very low or not detectable in all other tissues tested.

Its subcellular location is the membrane. It is found in the cytoplasm. This Homo sapiens (Human) protein is Pleckstrin homology domain-containing family B member 1 (PLEKHB1).